We begin with the raw amino-acid sequence, 312 residues long: Tumor necrosis factor receptor type 1-associated DEATH domain protein (312 aa).

The Nuclear export signal signature appears at 147–163 (LRDEELTELENALRNLT). Residues 166–200 (SAGGQGSDVQGTPAPLQSLAPSPPEEKPPPPQPGQ) are disordered. In terms of domain architecture, Death spans 215–305 (NLQDQQKFAR…SLAEDLLGLA (91 aa)). The segment at 222–289 (FARSVGLKWR…ATLQRLVEAL (68 aa)) is interaction with KRT14 and KRT18. Positions 231-244 (RKVGRSLQRSCRAL) match the Nuclear localization signal motif.

Stimulation of TNF-alpha receptor TNFRSF1A leads to the formation of two distinct signaling complexes. Plasma membrane-bound complex I is composed of TNFRSF1A, TRADD, RIPK1, TRAF2 and BIRC2/c-IAP1 or BIRC3 which interacts with CHUCK/IKK-alpha, IKBKB/IKK-beta and IKBKG/IKK-gamma promoting cell survival. Subsequently, TRADD, RIPK1 and TRAF2 dissociate from TNFRSF1A and form cytoplasmic complex II with FADD and caspase CASP8 promoting cell apoptosis. Within complex I, interacts with TNFRSF1A/TNFR1, TRAF2 and kinase RIPK1. Within complex I, interacts with TRPC4AP; the interaction promotes NF-kappa B activation. UXT1 associates with complex I; the interaction prevents the formation of complex II. Within complex I Interacts with scaffold protein DAB2IP. Interacts with autophagy receptor SQSTM1. Interacts with E3 ligase TRIP12. Interacts with kinase HIPK2. Interacts with keratin KRT14. Interacts with keratin KRT18. Interacts with keratins KRT16 and KRT17. Interacts with FADD. Interacts with TOMM70. Interacts with TMC8; the interaction impairs the formation of complex I and facilites complex II formation.

The protein resides in the nucleus. It localises to the cytoplasm. It is found in the cytoskeleton. In terms of biological role, adapter molecule for TNFRSF1A/TNFR1 that specifically associates with the cytoplasmic domain of activated TNFRSF1A/TNFR1 mediating its interaction with FADD. Overexpression of TRADD leads to two major TNF-induced responses, apoptosis and activation of NF-kappa-B. The nuclear form acts as a tumor suppressor by preventing ubiquitination and degradation of isoform p19ARF/ARF of CDKN2A by TRIP12: acts by interacting with TRIP12, leading to disrupt interaction between TRIP12 and isoform p19ARF/ARF of CDKN2A. This Bos taurus (Bovine) protein is Tumor necrosis factor receptor type 1-associated DEATH domain protein.